Here is a 352-residue protein sequence, read N- to C-terminus: RNA 3'-terminal phosphate cyclase (352 aa).

Residues Gln-102 and 292 to 296 (HMGDQ) each bind ATP. His-318 serves as the catalytic Tele-AMP-histidine intermediate.

Belongs to the RNA 3'-terminal cyclase family. Type 1 subfamily.

It is found in the cytoplasm. The catalysed reaction is a 3'-end 3'-phospho-ribonucleotide-RNA + ATP = a 3'-end 2',3'-cyclophospho-ribonucleotide-RNA + AMP + diphosphate. Its function is as follows. Catalyzes the conversion of 3'-phosphate to a 2',3'-cyclic phosphodiester at the end of RNA. The mechanism of action of the enzyme occurs in 3 steps: (A) adenylation of the enzyme by ATP; (B) transfer of adenylate to an RNA-N3'P to produce RNA-N3'PP5'A; (C) and attack of the adjacent 2'-hydroxyl on the 3'-phosphorus in the diester linkage to produce the cyclic end product. The biological role of this enzyme is unknown but it is likely to function in some aspects of cellular RNA processing. In Methanopyrus kandleri (strain AV19 / DSM 6324 / JCM 9639 / NBRC 100938), this protein is RNA 3'-terminal phosphate cyclase.